We begin with the raw amino-acid sequence, 258 residues long: Gamma carbonic anhydrase 3, mitochondrial (258 aa).

A mitochondrion-targeting transit peptide spans 1–43; sequence MGTMGKAFYSVGFWIRETGQALDRLGCRLQGKNHFREQLSRHR. Substrate is bound by residues 86-88 and 101-102; these read RGD and QD. H107, H130, and H135 together coordinate Zn(2+). N209 is a substrate binding site.

Belongs to the gamma-class carbonic anhydrase family. As to quaternary structure, homotrimer. Component of the oxidoreductase respiratory chain complex I; element of the extra matrix-exposed domain, which is attached to the membrane arm of this complex. Zn(2+) serves as cofactor.

It localises to the mitochondrion membrane. Functionally, enzyme involved in the catabolism of H(2)CO(3) but that does not mediates the reversible hydration of carbon dioxide. Mediates complex I assembly in mitochondria and respiration. The polypeptide is Gamma carbonic anhydrase 3, mitochondrial (GAMMACA3) (Arabidopsis thaliana (Mouse-ear cress)).